The following is an 822-amino-acid chain: Calpain-3 (822 aa).

The disordered stretch occupies residues 1–36; that stretch reads MPTVISASVAPRTGAEPRSPGPIAQAAQGKGTEAGG. The 345-residue stretch at 74-418 folds into the Calpain catalytic domain; the sequence is LFVDPEFPPD…FTKLEICNLT (345 aa). Active-site residues include cysteine 129, histidine 335, and asparagine 359. The tract at residues 419-587 is domain III; it reads ADALESDKLQ…KRNLSEEVEN (169 aa). Residues 588–649 are linker; that stretch reads TISVDRPVKK…LKPGNIDQES (62 aa). The segment at 600 to 651 is disordered; sequence PKPIIFGSDRANSNKELGVDQESEEGKDNTSPDKQAKSPQLKPGNIDQESKE. The span at 623–635 shows a compositional bias: basic and acidic residues; that stretch reads EEGKDNTSPDKQA. 4 EF-hand domains span residues 650 to 684, 693 to 726, 723 to 758, and 788 to 822; these read KEQR…VVNK, FTLE…KKIK, KKIK…AGFH, and VRLE…TMYA. Residues 650-822 are domain IV; sequence KEQRQFRNIF…LEWLQLTMYA (173 aa). Ca(2+) contacts are provided by alanine 663, aspartate 666, glutamate 668, glutamate 673, aspartate 706, aspartate 708, serine 710, arginine 712, glutamate 717, aspartate 736, aspartate 738, serine 740, threonine 742, glutamate 747, aspartate 801, aspartate 803, aspartate 805, and isoleucine 807.

Belongs to the peptidase C2 family. In terms of assembly, homodimer; via EF-hand domain 4. Interacts with TTN/titin. Interacts with CMYA5; this interaction, which results in CMYA5 proteolysis, may protect CAPN3 from autolysis. Interacts with SIMC1. Interacts with UTP25; the interaction is required for CAPN3 translocation to the nucleolus. In terms of tissue distribution, skeletal muscle.

It localises to the cytoplasm. It is found in the nucleus. The protein resides in the nucleolus. It catalyses the reaction Broad endopeptidase activity.. Its activity is regulated as follows. Activated by micromolar concentrations of calcium and inhibited by calpastatin. Calcium-regulated non-lysosomal thiol-protease. Proteolytically cleaves CTBP1. Mediates, with UTP25, the proteasome-independent degradation of p53/TP53. The polypeptide is Calpain-3 (CAPN3) (Ovis aries (Sheep)).